The primary structure comprises 211 residues: Ribosomal RNA small subunit methyltransferase G (211 aa).

Residues Gly-73, 126–127 (IE), and Arg-142 contribute to the S-adenosyl-L-methionine site.

The protein belongs to the methyltransferase superfamily. RNA methyltransferase RsmG family.

It localises to the cytoplasm. The catalysed reaction is guanosine(527) in 16S rRNA + S-adenosyl-L-methionine = N(7)-methylguanosine(527) in 16S rRNA + S-adenosyl-L-homocysteine. Specifically methylates the N7 position of guanine in position 527 of 16S rRNA. This Methylorubrum extorquens (strain CM4 / NCIMB 13688) (Methylobacterium extorquens) protein is Ribosomal RNA small subunit methyltransferase G.